The following is a 317-amino-acid chain: MQLQTQSFALNLLPSPNFAKPIERREFISLKRDPSRPISLRCSVSTTLDTPATASTHKPFPAEVSRSIMELSSVGTLSTLTHDGWPLGVGVRFAVDKDGTPVLCLNRSVSPDKRSALHVQLEQCGLRTPQCTIQGSIGRPGDDTVLKRLSATWREKFGEEVKEDSLYVVAVDRVLQMEDFMEDGIWVASSDYKNASPDPLRDIAEDIVNQINANNMEDIFRFCNVYVDLDFVVSETKMIWMDRLGFDLRVWSPRGVYDVRIPFPMEVTDEKGAKSSFNGMSQLAWEVEKSYCPADFNKVKLLKQVVGSSHSHKGGGQ.

The transit peptide at 1–42 (MQLQTQSFALNLLPSPNFAKPIERREFISLKRDPSRPISLRC) directs the protein to the chloroplast.

In terms of assembly, interacts with HEMA1 and forms a heterotetramer of two GLUTRBP and two HEMA1 subunits.

The protein localises to the plastid. Its subcellular location is the chloroplast stroma. Its function is as follows. Involved in the regulation of glutamyl-tRNA reductase (GluTR) which is important for the synthesis and distribution of 5-aminolevulinate, a precursor in heme and chlorophyll biosynthesis. Stimulates GluTR activity and regulates glutamate-1-semialdehyde release. May play a role in heme metabolism. Necessary for efficient photosynthetic electron transport in chloroplasts. In Arabidopsis thaliana (Mouse-ear cress), this protein is Glutamyl-tRNA reductase-binding protein, chloroplastic.